Consider the following 367-residue polypeptide: Aminomethyltransferase (367 aa).

It belongs to the GcvT family. As to quaternary structure, the glycine cleavage system is composed of four proteins: P, T, L and H.

It carries out the reaction N(6)-[(R)-S(8)-aminomethyldihydrolipoyl]-L-lysyl-[protein] + (6S)-5,6,7,8-tetrahydrofolate = N(6)-[(R)-dihydrolipoyl]-L-lysyl-[protein] + (6R)-5,10-methylene-5,6,7,8-tetrahydrofolate + NH4(+). The glycine cleavage system catalyzes the degradation of glycine. This is Aminomethyltransferase from Mycolicibacterium paratuberculosis (strain ATCC BAA-968 / K-10) (Mycobacterium paratuberculosis).